Consider the following 67-residue polypeptide: Sodium channel neurotoxin MeuNaTxalpha-10 (67 aa).

The LCN-type CS-alpha/beta domain maps to 2-66; the sequence is RDGYIAKPHN…VPIRIPGKCH (65 aa). Disulfide bonds link cysteine 12–cysteine 65, cysteine 16–cysteine 38, cysteine 24–cysteine 48, and cysteine 28–cysteine 50. Position 67 (arginine 67) is a propeptide, removed by a carboxypeptidase.

This sequence belongs to the long (4 C-C) scorpion toxin superfamily. Sodium channel inhibitor family. Alpha subfamily. As to expression, expressed by the venom gland.

It localises to the secreted. Alpha toxins bind voltage-independently at site-3 of sodium channels (Nav) and inhibit the inactivation of the activated channels, thereby blocking neuronal transmission. The polypeptide is Sodium channel neurotoxin MeuNaTxalpha-10 (Mesobuthus eupeus (Lesser Asian scorpion)).